The sequence spans 93 residues: MPRSLKKGPFVDGHLMKKVDMAVANSDRRVIKTWTRRSTILPEMVGLTFAVHNGKKFMPVFVTENMVGHKLGEFAPTRTYHGHAADKKSKAKK.

It belongs to the universal ribosomal protein uS19 family.

Its function is as follows. Protein S19 forms a complex with S13 that binds strongly to the 16S ribosomal RNA. In Nitratidesulfovibrio vulgaris (strain ATCC 29579 / DSM 644 / CCUG 34227 / NCIMB 8303 / VKM B-1760 / Hildenborough) (Desulfovibrio vulgaris), this protein is Small ribosomal subunit protein uS19.